Reading from the N-terminus, the 874-residue chain is DNA mismatch repair protein MutS (874 aa).

613–620 (GPNMGGKS) lines the ATP pocket. The interval 799-820 (EAGSTPSPAPVSVNEPKPAAPT) is disordered.

This sequence belongs to the DNA mismatch repair MutS family.

Its function is as follows. This protein is involved in the repair of mismatches in DNA. It is possible that it carries out the mismatch recognition step. This protein has a weak ATPase activity. In Marinobacter nauticus (strain ATCC 700491 / DSM 11845 / VT8) (Marinobacter aquaeolei), this protein is DNA mismatch repair protein MutS.